Here is a 1246-residue protein sequence, read N- to C-terminus: MSSKLKYTDIDVPLDWLYKGKRRNRTKSAASTRTSEATTTSVKKTATLPSTAAVPTKTIASPQRPLSGQNVNNELSNSKPAVSAEKVSQQGQVPTRRTRSHSVSYGLLQKKNNNDDTTDSPKISRIRTAQDQPVKETKSSTLAEPIVSKKGRSRSSSISTSLNERSKKSLFGSLFGRRPSTTPSHVVERPLSSQNDHKKSTELPPIDTRQSKISTPTSTPTTASSKPSSSGGNRHSDGSLTSKLLSIPHNILETSSTNFNAHHHIQSHHSSGREQDSPHSESSDLPPILEKETTQKQLQKVSKVNLKRVTIAVQEFNSDPPQQLPSRKPKRGNVLIPEDMISAPPLISLGITNSSDQSSFQSNISPSYSKDSKEYKLALENFKKAAKEAEKHQKDAYYVAERMAQEVANYKARQLKTSPLTGATNSAADSATDQESSSLDARASKLHIDKPINVGAHPFETHQDDNIKYSSHLEQTLDVAYTRCCHLREILPIPSTLRQVKGKTAPLQTLKFLNPKPTLVDILSFCDFIAITPIHNIIFDNVSLTHDMFKIVICSLVTSPVVEKLGLRNVVINEQSWKLLCKFLLQNKTLIKLDISQTKARTDLNDSNYRDQMDWELFCEVLRNREGRPLEELLLNGLRFDKMSFSHFKNILLTFAQMNPKNPIRLGMANVEFSTECFDFLFNWMSEYNVQGVDLAYNNLESLAKRMIKKLARLPYKHLEYFTLNSTNITSVDDMSYILKYLSRLPSIKFLDLSNLPQLFPGILTSGYKYFPQFPQLKRIHFDFDDLSIKETTMLVSILAKCETLSHVSLIGQSPMPDASKISDSTDEPDKSKDEKKEQIVFMRNTLWASLYAFVRDSHNLVSLDVDYDQVPDEIQSRIALCLMHNMKRIMDSSFKLDELTVQDDLIFDGSLITETAEEVLKRLNDKSLLQNDVGKKYLLKKYFEKMEKVHHNVQNTIDSMFEKRKSGELPLQEKENLLRLLLLEKNLSNILDIFASMPNIADVVPFSKADNSFPNIGDSTVSANYNDGIRPSLKHLDSDRLINDVSIPENDSSIRPHLMATDSGRIIDVTTGKALLFKSSSNTSLAGKRQEEEEGELHKWGVFVQHQSSRHNSGLPSSANSSRISGSLTPDSSVAGGKKGESSRTSGTRPKILPKIPTGAELRDAIIKAKGIDSVDDLIKNVTSEKVGLESLYGDELNSRSPSNDSLQESQQKAPLQRPLVEDETVTKKYDKLLNDLSNVRHSKT.

Disordered regions lie at residues 19–241 (KGKR…GSLT), 263–288 (HHIQ…LPPI), and 816–836 (MPDA…KDEK). A compositionally biased stretch (low complexity) spans 27–41 (KSAASTRTSEATTTS). Over residues 58–95 (TIASPQRPLSGQNVNNELSNSKPAVSAEKVSQQGQVPT) the composition is skewed to polar residues. Residue Ser-102 is modified to Phosphoserine. Thr-128 is modified (phosphothreonine). Composition is skewed to low complexity over residues 154–163 (RSSSISTSLN) and 211–230 (SKIS…PSSS). The segment covering 271–282 (SGREQDSPHSES) has biased composition (basic and acidic residues). The residue at position 277 (Ser-277) is a Phosphoserine. Phosphoserine is present on Ser-1013. Composition is skewed to polar residues over residues 1109–1133 (SSRH…TPDS) and 1200–1215 (SRSP…QQKA). Disordered stretches follow at residues 1109–1157 (SSRH…LPKI) and 1192–1224 (SLYG…LVED). Phosphothreonine is present on Thr-1130. Ser-1200, Ser-1204, and Ser-1207 each carry phosphoserine.

The protein belongs to the GIP3/HER1 family. In terms of assembly, may interact with ribosomes.

The protein localises to the cytoplasm. Functionally, required for HMG2-induced endoplasmic reticulum-remodeling. This Saccharomyces cerevisiae (strain ATCC 204508 / S288c) (Baker's yeast) protein is HMG2-induced ER-remodeling protein 1 (HER1).